We begin with the raw amino-acid sequence, 473 residues long: Putative sulfoquinovose importer (473 aa).

The next 11 helical transmembrane spans lie at 18-38, 45-65, 88-108, 110-130, 160-180, 187-207, 239-259, 276-296, 317-337, 380-400, and 415-435; these read AYGVGDFGSNLMLCIGTLYLL, LGMPAYYGGIIFLVAKFFTAF, PFILYASFPVALVATAQFFAT, FTLPVKTAFATVLFMLFGLFY, GGATIGLLLCTVGFMPIQALF, GYLIAAVIFSVCGLFSMWWCF, LLVLCVANLCTLAAFNIKLAI, WMGFFSMGCILIGVLLVPAAV, ILNFIWGGTSFLFVIFSCIAF, ISAALAGFLPGIMLTQIGYIP, and LIFLWPCGLAIIAALTMGFFY.

This sequence belongs to the sodium:galactoside symporter (TC 2.A.2) family.

The protein localises to the cell inner membrane. Functionally, could be involved in sulfoquinovose import. This is Putative sulfoquinovose importer (yihO) from Salmonella typhimurium (strain LT2 / SGSC1412 / ATCC 700720).